The primary structure comprises 165 residues: Large ribosomal subunit protein uL10 (165 aa).

Belongs to the universal ribosomal protein uL10 family. As to quaternary structure, part of the ribosomal stalk of the 50S ribosomal subunit. The N-terminus interacts with L11 and the large rRNA to form the base of the stalk. The C-terminus forms an elongated spine to which L12 dimers bind in a sequential fashion forming a multimeric L10(L12)X complex.

Forms part of the ribosomal stalk, playing a central role in the interaction of the ribosome with GTP-bound translation factors. This chain is Large ribosomal subunit protein uL10, found in Burkholderia ambifaria (strain MC40-6).